We begin with the raw amino-acid sequence, 691 residues long: MTTAEDVAGNPYISDPRTDFESVEDVDAETAREQADQLREALRYHDYRYYVENDPVIGDRAYDALFSRLQRLESAFNLDTDGSPTQRVGGEPLDELPDVEHVARMGSIDQGGEEADVREFDSRVRNGLDGDVQYFCEPKFDGLSVEIVYEDGVYQRAATRGDGEVGEDVTENVRTISSVPQRLRGDYPDFLAVRGEVYIPRDAFTTFNRERVERGEDPFANPRNAAAGTLRQLDPSVTAERPLSIFFFGVLDASVDFESHSELHERFPEWGLRVCDRTAVVDDIDAAIDYRNEQQQARDDLDYEIDGVVIKVDDMDACDDLGSTARAPRWAFAYKFPARKEETTVRDIVVQVGRTGRLTPVALMDPVEVGGVTVSRASLHNPSLIADLGVDVGDRVRIKRAGDVIPDVVEVLDDDGDGHFEFPETCPACDSPVEHDGPMAFCTGGLTCPAQRERSVEHYASRDALDIEGVGEKAVQQLLDAGLVSDPADLYDLTVEDLTGLEGWGETSARNLVDGMDSAREPPLADFLVALGIPEVGTVTARNLAQEFGTFEAILDAADEGDTDAFEAVPDVGQTVARSIVEFFEGEGNRAVIDRLLDHVEPQAAEETDGDALDGQTFVFTGSLDGYTRGEAQELVERNDGSATSSVSGNTDYLVLGDNPGQRKQDDAAAHDVETLTEDEFEELLDDAGVL.

Residues 1 to 22 (MTTAEDVAGNPYISDPRTDFES) form a disordered region. NAD(+)-binding positions include 59–63 (DRAYD), 107–108 (SI), and E137. K139 functions as the N6-AMP-lysine intermediate in the catalytic mechanism. NAD(+)-binding residues include R160, E196, K311, and K335. Zn(2+) is bound by residues C426, C429, C442, and C448. The 84-residue stretch at 608–691 (TDGDALDGQT…EELLDDAGVL (84 aa)) folds into the BRCT domain. The interval 637–667 (ERNDGSATSSVSGNTDYLVLGDNPGQRKQDD) is disordered. Polar residues predominate over residues 641 to 651 (GSATSSVSGNT).

The protein belongs to the NAD-dependent DNA ligase family. LigA subfamily. Mg(2+) is required as a cofactor. Mn(2+) serves as cofactor.

The catalysed reaction is NAD(+) + (deoxyribonucleotide)n-3'-hydroxyl + 5'-phospho-(deoxyribonucleotide)m = (deoxyribonucleotide)n+m + AMP + beta-nicotinamide D-nucleotide.. DNA ligase that catalyzes the formation of phosphodiester linkages between 5'-phosphoryl and 3'-hydroxyl groups in double-stranded DNA using NAD as a coenzyme and as the energy source for the reaction. It is essential for DNA replication and repair of damaged DNA. In Haloarcula marismortui (strain ATCC 43049 / DSM 3752 / JCM 8966 / VKM B-1809) (Halobacterium marismortui), this protein is DNA ligase.